Consider the following 705-residue polypeptide: uncharacterized protein (705 aa).

The zn(2)-C6 fungal-type DNA-binding region spans 24–52 (CHFCRVRKLKCDRVRPFCGSCSSRNRKQC).

The protein resides in the nucleus. This is an uncharacterized protein from Saccharomyces cerevisiae (strain ATCC 204508 / S288c) (Baker's yeast).